Consider the following 415-residue polypeptide: L-threonine dehydratase biosynthetic IlvA (415 aa).

K53 carries the N6-(pyridoxal phosphate)lysine modification. Pyridoxal 5'-phosphate contacts are provided by residues N80, 183–187 (GGGGL), and S308. An ACT-like domain is found at 332–406 (HYFIIQFPQR…KGFEYREINK (75 aa)).

This sequence belongs to the serine/threonine dehydratase family. In terms of assembly, homotetramer. Requires pyridoxal 5'-phosphate as cofactor.

The catalysed reaction is L-threonine = 2-oxobutanoate + NH4(+). The protein operates within amino-acid biosynthesis; L-isoleucine biosynthesis; 2-oxobutanoate from L-threonine: step 1/1. In terms of biological role, catalyzes the anaerobic formation of alpha-ketobutyrate and ammonia from threonine in a two-step reaction. The first step involved a dehydration of threonine and a production of enamine intermediates (aminocrotonate), which tautomerizes to its imine form (iminobutyrate). Both intermediates are unstable and short-lived. The second step is the nonenzymatic hydrolysis of the enamine/imine intermediates to form 2-ketobutyrate and free ammonia. In the low water environment of the cell, the second step is accelerated by RidA. This is L-threonine dehydratase biosynthetic IlvA (ilvA) from Halalkalibacterium halodurans (strain ATCC BAA-125 / DSM 18197 / FERM 7344 / JCM 9153 / C-125) (Bacillus halodurans).